We begin with the raw amino-acid sequence, 382 residues long: POU domain, class 3, transcription factor 2-A (382 aa).

Disordered stretches follow at residues 69–136 (PWAT…SSNG), 150–206 (GMIN…TPTS), and 348–382 (EKRM…TSVQ). Over residues 122-136 (STGSTHLSSMASSNG) the composition is skewed to polar residues. A compositionally biased stretch (basic and acidic residues) spans 165–178 (LRDSHDDHHGDHGH). Residues 179–194 (QQVSQAQQQHSQLQGG) show a composition bias toward low complexity. The region spanning 201–275 (EDTPTSDDLE…LLNKWLEEAD (75 aa)) is the POU-specific domain. A DNA-binding region (homeobox) is located at residues 293–352 (KRKKRTSIEVSVKGALESHFLKCPKPSAPEITSLADSLQLEKEVVRVWFCNRRQKEKRMT).

This sequence belongs to the POU transcription factor family. Class-3 subfamily. As to expression, expressed in the developing brain and spinal cord. Also found in a restricted region of the auditory vesicle during development. In the adult, expression is restricted to the brain.

Its subcellular location is the nucleus. Functionally, transcription factor that may be implicated in patterning of the central nervous system during early development. In Xenopus laevis (African clawed frog), this protein is POU domain, class 3, transcription factor 2-A (pou3f2-a).